The primary structure comprises 88 residues: Translation initiation factor IF-1 1 (88 aa).

Positions 1–72 (MAKEELIELD…TKGRINFRHK (72 aa)) constitute an S1-like domain.

Belongs to the IF-1 family. In terms of assembly, component of the 30S ribosomal translation pre-initiation complex which assembles on the 30S ribosome in the order IF-2 and IF-3, IF-1 and N-formylmethionyl-tRNA(fMet); mRNA recruitment can occur at any time during PIC assembly.

The protein resides in the cytoplasm. One of the essential components for the initiation of protein synthesis. Stabilizes the binding of IF-2 and IF-3 on the 30S subunit to which N-formylmethionyl-tRNA(fMet) subsequently binds. Helps modulate mRNA selection, yielding the 30S pre-initiation complex (PIC). Upon addition of the 50S ribosomal subunit IF-1, IF-2 and IF-3 are released leaving the mature 70S translation initiation complex. This chain is Translation initiation factor IF-1 1, found in Burkholderia mallei (strain ATCC 23344).